A 507-amino-acid polypeptide reads, in one-letter code: Maturase K (507 aa).

It belongs to the intron maturase 2 family. MatK subfamily.

The protein resides in the plastid. The protein localises to the chloroplast. Usually encoded in the trnK tRNA gene intron. Probably assists in splicing its own and other chloroplast group II introns. The protein is Maturase K of Lens ervoides (Beaded lentil).